A 98-amino-acid chain; its full sequence is Defensin-like protein 192 (98 aa).

Residues 1–27 (MATKSVSTFAIFFILVLAIFETPEIEA) form the signal peptide. 4 disulfides stabilise this stretch: cysteine 32/cysteine 86, cysteine 45/cysteine 69, cysteine 54/cysteine 81, and cysteine 58/cysteine 83.

It belongs to the DEFL family. Protease inhibitor I18 (RTI/MTI-2) subfamily.

The protein resides in the secreted. This Arabidopsis thaliana (Mouse-ear cress) protein is Defensin-like protein 192 (ATTI7).